The sequence spans 179 residues: MAKLHDKYQETVVAELTKKFGYTSVMQVPRIEKITLNMGVGEAVADKKVMEHAVRDMTAIAGQKPVVTVARKSVAGFKIREGYPIGCKVTLRGERMWEFLERLVDIAIPRIRDFRGLSAKAFDGRGNYAMGVREQIIFPEIDYDKIDKIRGMDIVITTSANSDEEGRALLDAFNFPFKK.

This sequence belongs to the universal ribosomal protein uL5 family. Part of the 50S ribosomal subunit; part of the 5S rRNA/L5/L18/L25 subcomplex. Contacts the 5S rRNA and the P site tRNA. Forms a bridge to the 30S subunit in the 70S ribosome.

This is one of the proteins that bind and probably mediate the attachment of the 5S RNA into the large ribosomal subunit, where it forms part of the central protuberance. In the 70S ribosome it contacts protein S13 of the 30S subunit (bridge B1b), connecting the 2 subunits; this bridge is implicated in subunit movement. Contacts the P site tRNA; the 5S rRNA and some of its associated proteins might help stabilize positioning of ribosome-bound tRNAs. The sequence is that of Large ribosomal subunit protein uL5 from Shewanella sp. (strain ANA-3).